We begin with the raw amino-acid sequence, 368 residues long: Probable dual-specificity RNA methyltransferase RlmN (368 aa).

E109 acts as the Proton acceptor in catalysis. One can recognise a Radical SAM core domain in the interval 115–355 (YPDRVTMCIS…VTIRDTRGQE (241 aa)). Residues C122 and C360 are joined by a disulfide bond. The [4Fe-4S] cluster site is built by C129, C133, and C136. Residues 184-185 (GE), S218, 241-243 (SLH), and N317 each bind S-adenosyl-L-methionine. The S-methylcysteine intermediate role is filled by C360.

This sequence belongs to the radical SAM superfamily. RlmN family. It depends on [4Fe-4S] cluster as a cofactor.

It localises to the cytoplasm. The enzyme catalyses adenosine(2503) in 23S rRNA + 2 reduced [2Fe-2S]-[ferredoxin] + 2 S-adenosyl-L-methionine = 2-methyladenosine(2503) in 23S rRNA + 5'-deoxyadenosine + L-methionine + 2 oxidized [2Fe-2S]-[ferredoxin] + S-adenosyl-L-homocysteine. It catalyses the reaction adenosine(37) in tRNA + 2 reduced [2Fe-2S]-[ferredoxin] + 2 S-adenosyl-L-methionine = 2-methyladenosine(37) in tRNA + 5'-deoxyadenosine + L-methionine + 2 oxidized [2Fe-2S]-[ferredoxin] + S-adenosyl-L-homocysteine. Functionally, specifically methylates position 2 of adenine 2503 in 23S rRNA and position 2 of adenine 37 in tRNAs. In Streptomyces coelicolor (strain ATCC BAA-471 / A3(2) / M145), this protein is Probable dual-specificity RNA methyltransferase RlmN.